A 239-amino-acid polypeptide reads, in one-letter code: UDP-2,3-diacylglucosamine hydrolase (239 aa).

Mn(2+)-binding residues include Asp8, His10, Asp41, Asn78, and His113. A substrate-binding site is contributed by Asn78 to Arg79. Residues Asp121, Ser159, Asn163, Lys166, and His194 each contribute to the substrate site. Mn(2+)-binding residues include His194 and His196.

It belongs to the LpxH family. It depends on Mn(2+) as a cofactor.

Its subcellular location is the cell inner membrane. The enzyme catalyses UDP-2-N,3-O-bis[(3R)-3-hydroxytetradecanoyl]-alpha-D-glucosamine + H2O = 2-N,3-O-bis[(3R)-3-hydroxytetradecanoyl]-alpha-D-glucosaminyl 1-phosphate + UMP + 2 H(+). It participates in glycolipid biosynthesis; lipid IV(A) biosynthesis; lipid IV(A) from (3R)-3-hydroxytetradecanoyl-[acyl-carrier-protein] and UDP-N-acetyl-alpha-D-glucosamine: step 4/6. In terms of biological role, hydrolyzes the pyrophosphate bond of UDP-2,3-diacylglucosamine to yield 2,3-diacylglucosamine 1-phosphate (lipid X) and UMP by catalyzing the attack of water at the alpha-P atom. Involved in the biosynthesis of lipid A, a phosphorylated glycolipid that anchors the lipopolysaccharide to the outer membrane of the cell. The protein is UDP-2,3-diacylglucosamine hydrolase of Shewanella sp. (strain MR-4).